Consider the following 277-residue polypeptide: 3-methyl-2-oxobutanoate hydroxymethyltransferase (277 aa).

Positions 43 and 82 each coordinate Mg(2+). 3-methyl-2-oxobutanoate contacts are provided by residues 43 to 44, Asp82, and Lys112; that span reads DS. Glu114 contacts Mg(2+). Glu181 acts as the Proton acceptor in catalysis.

This sequence belongs to the PanB family. As to quaternary structure, homodecamer; pentamer of dimers. The cofactor is Mg(2+).

It localises to the cytoplasm. It carries out the reaction 3-methyl-2-oxobutanoate + (6R)-5,10-methylene-5,6,7,8-tetrahydrofolate + H2O = 2-dehydropantoate + (6S)-5,6,7,8-tetrahydrofolate. The protein operates within cofactor biosynthesis; (R)-pantothenate biosynthesis; (R)-pantoate from 3-methyl-2-oxobutanoate: step 1/2. Catalyzes the reversible reaction in which hydroxymethyl group from 5,10-methylenetetrahydrofolate is transferred onto alpha-ketoisovalerate to form ketopantoate. The polypeptide is 3-methyl-2-oxobutanoate hydroxymethyltransferase (Exiguobacterium sp. (strain ATCC BAA-1283 / AT1b)).